The chain runs to 266 residues: Non-structural maintenance of chromosomes element 1 homolog (266 aa).

The segment at 1–102 is interaction with NSMCE3; it reads MQGSTRRAGA…SVSKMATDFA (102 aa). An RING-type; atypical zinc finger spans residues 191–232; it reads CNICHGLLIQGQSCETCGIRMHLPCVAKYFQSIPEPHCPHCN. Residues 246–266 are disordered; that stretch reads EKEREAGISKSSRKSLRTRQH. Residues 256 to 266 show a composition bias toward basic residues; that stretch reads SSRKSLRTRQH.

This sequence belongs to the NSE1 family. As to quaternary structure, component of the SMC5-SMC6 complex which consists at least of SMC5, SMC6, NSMCE2, NSMCE1, NSMCE4A or EID3 and NSMCE3. NSMCE1, NSMCE4A or EID3 and NSMCE3 probably form a subcomplex that bridges the head domains of the SMC5-SMC6 heterodimer. Interacts with NSMCE3. Post-translationally, ubiquitinated.

The protein resides in the nucleus. The protein localises to the chromosome. Its subcellular location is the telomere. The catalysed reaction is S-ubiquitinyl-[E2 ubiquitin-conjugating enzyme]-L-cysteine + [acceptor protein]-L-lysine = [E2 ubiquitin-conjugating enzyme]-L-cysteine + N(6)-ubiquitinyl-[acceptor protein]-L-lysine.. Its function is as follows. RING-type zinc finger-containing E3 ubiquitin ligase that assembles with melanoma antigen protein (MAGE) to catalyze the direct transfer of ubiquitin from E2 ubiquitin-conjugating enzyme to a specific substrate. Within MAGE-RING ubiquitin ligase complex, MAGE stimulates and specifies ubiquitin ligase activity likely through recruitment and/or stabilization of the E2 ubiquitin-conjugating enzyme at the E3:substrate complex. Involved in maintenance of genome integrity, DNA damage response and DNA repair. NSMCE3/MAGEG1 and NSMCE1 ubiquitin ligase are components of SMC5-SMC6 complex and may positively regulate homologous recombination-mediated DNA repair. This is Non-structural maintenance of chromosomes element 1 homolog (Nsmce1) from Mus musculus (Mouse).